Reading from the N-terminus, the 399-residue chain is CCA-adding enzyme (399 aa).

G28 and R31 together coordinate ATP. CTP is bound by residues G28 and R31. 2 residues coordinate Mg(2+): D41 and D43. Residues R112, D155, R158, R161, and R164 each coordinate ATP. Residues R112, D155, R158, R161, and R164 each contribute to the CTP site.

It belongs to the tRNA nucleotidyltransferase/poly(A) polymerase family. Bacterial CCA-adding enzyme type 3 subfamily. In terms of assembly, homodimer. It depends on Mg(2+) as a cofactor.

It catalyses the reaction a tRNA precursor + 2 CTP + ATP = a tRNA with a 3' CCA end + 3 diphosphate. The catalysed reaction is a tRNA with a 3' CCA end + 2 CTP + ATP = a tRNA with a 3' CCACCA end + 3 diphosphate. Catalyzes the addition and repair of the essential 3'-terminal CCA sequence in tRNAs without using a nucleic acid template. Adds these three nucleotides in the order of C, C, and A to the tRNA nucleotide-73, using CTP and ATP as substrates and producing inorganic pyrophosphate. tRNA 3'-terminal CCA addition is required both for tRNA processing and repair. Also involved in tRNA surveillance by mediating tandem CCA addition to generate a CCACCA at the 3' terminus of unstable tRNAs. While stable tRNAs receive only 3'-terminal CCA, unstable tRNAs are marked with CCACCA and rapidly degraded. The polypeptide is CCA-adding enzyme (Staphylococcus saprophyticus subsp. saprophyticus (strain ATCC 15305 / DSM 20229 / NCIMB 8711 / NCTC 7292 / S-41)).